Here is a 302-residue protein sequence, read N- to C-terminus: MWFKNLMTYRLTKPLDWDLAQLQTQLEDCQFHPCGTQDQSKFGWSAPLRGSDLLYFSVGKQILLIAKKEEKILPANVVKRELDDRIESLEQKENRKLKKVEKQTLKDDVVMNLLPRAFSKNQHTALWIDTENNLIHIDAASSKRAEDALALLRKSLGSLPVVPLAFANEPSTILTNWILQDNLPHWLLALEEAELRGSQEDSVIRCKKQPLENEEILALLQDGKKVVSKLALEWEDTLTFVFNEDCTIKRLKFADTVREKNDDILKEDFAQRFDADFVLMTGILAKLTENLLDEFGGEKARL.

This sequence belongs to the RdgC family.

It is found in the cytoplasm. The protein localises to the nucleoid. Functionally, may be involved in recombination. The chain is Recombination-associated protein RdgC from Haemophilus influenzae (strain PittGG).